Reading from the N-terminus, the 501-residue chain is Phosphatidylinositol 4-kinase type 2-beta (501 aa).

2 disordered regions span residues 1 to 30 (MMAE…SSEV) and 65 to 122 (TELE…NHFP). The span at 17–27 (GDSTPETNFLS) shows a compositional bias: polar residues. Residues 76-88 (ALLLPGPAGSLSP) show a composition bias toward low complexity. A compositionally biased stretch (polar residues) spans 99-117 (NMLSSSSDNLASPGNSSGE). The 331-residue stretch at 141–471 (GVFPERISQG…VQMPRVVVER (331 aa)) folds into the PI3K/PI4K catalytic domain. Residues 147–153 (ISQGSSG) form a G-loop region. The ATP site is built by Ser154 and Lys169. The tract at residues 174 to 176 (EPY) is important for substrate binding. The tract at residues 182–195 (KWTKYFHKVCCPCC) is important for interaction with membranes. ATP contacts are provided by residues 278–281 (QLFV) and 292–293 (RK). Residues 285–293 (HEADFWLRK) are important for interaction with membranes. Residues 322–330 (RNTDRGNDN) form a catalytic loop region. An activation loop region spans residues 362–382 (AIDNGLAFPFKHPDEWRAYPF). Asp364 is an ATP binding site. Residues 377–386 (WRAYPFHWAW) are important for interaction with membranes.

The protein belongs to the PI3/PI4-kinase family. Type II PI4K subfamily.

The protein localises to the cytoplasm. Its subcellular location is the cytosol. It localises to the golgi apparatus membrane. It is found in the endoplasmic reticulum membrane. The protein resides in the cell membrane. The protein localises to the early endosome membrane. It catalyses the reaction a 1,2-diacyl-sn-glycero-3-phospho-(1D-myo-inositol) + ATP = a 1,2-diacyl-sn-glycero-3-phospho-(1D-myo-inositol 4-phosphate) + ADP + H(+). Its function is as follows. Contributes to the overall PI4-kinase activity of the cell. This contribution may be especially significant in plasma membrane, endosomal and Golgi compartments. The phosphorylation of phosphatidylinositol (PI) to PI4P is the first committed step in the generation of phosphatidylinositol 4,5-bisphosphate (PIP2), a precursor of the second messenger inositol 1,4,5-trisphosphate (InsP3). In Danio rerio (Zebrafish), this protein is Phosphatidylinositol 4-kinase type 2-beta (pi4k2b).